We begin with the raw amino-acid sequence, 303 residues long: Mitochondrial substrate carrier family protein E (303 aa).

Over 1 to 8 the chain is Mitochondrial intermembrane; sequence MENKKESS. Solcar repeat units lie at residues 6–93, 104–197, and 210–298; these read ESSL…SKQW, ESTI…CKST, and LPIP…LKYL. A helical membrane pass occupies residues 9 to 29; the sequence is LLYILTGATSGLLADSIMHPV. The Mitochondrial matrix segment spans residues 30–67; sequence DTVRARVQIEKVGKSQYKGTFNALNQIIKNEGVSYLYK. A helical transmembrane segment spans residues 68-88; that stretch reads GFPIVATATVPAHALYFLGYE. At 89 to 109 the chain is on the mitochondrial intermembrane side; sequence YSKQWVTDRYGKKWGESTITH. A helical membrane pass occupies residues 110–130; sequence FSAGFVADALGSLIWVPMDII. Topologically, residues 131 to 171 are mitochondrial matrix; that stretch reads KQRLQVQTNTQKLNPNQTYYKGSFHAGKIILQEEGIRGLYR. The chain crosses the membrane as a helical span at residues 172–192; it reads GFMPALATYGPFVGIYFSVYE. Residues 193-215 are Mitochondrial intermembrane-facing; it reads KCKSTISSLLSKEKDQYLPIPYQ. A helical transmembrane segment spans residues 216–236; that stretch reads LGSGFFAGAFAAAVTCPLDVI. The Mitochondrial matrix portion of the chain corresponds to 237-268; the sequence is KTRIQVQRSTEKQIYKGMWDSFKTILKEEGPK. A helical membrane pass occupies residues 269 to 289; sequence AFVKGMGARIWWIAPGNALTI. The Mitochondrial intermembrane portion of the chain corresponds to 290–303; that stretch reads ASYEQLKYLFKDLI.

Belongs to the mitochondrial carrier (TC 2.A.29) family.

The protein resides in the mitochondrion inner membrane. Functionally, mitochondrial solute carriers shuttle metabolites, nucleotides, and cofactors through the mitochondrial inner membrane. In Dictyostelium discoideum (Social amoeba), this protein is Mitochondrial substrate carrier family protein E (mcfE).